Here is a 357-residue protein sequence, read N- to C-terminus: Peptide chain release factor 1 (357 aa).

N5-methylglutamine is present on Gln232.

This sequence belongs to the prokaryotic/mitochondrial release factor family. Methylated by PrmC. Methylation increases the termination efficiency of RF1.

The protein resides in the cytoplasm. Functionally, peptide chain release factor 1 directs the termination of translation in response to the peptide chain termination codons UAG and UAA. The protein is Peptide chain release factor 1 of Maridesulfovibrio salexigens (strain ATCC 14822 / DSM 2638 / NCIMB 8403 / VKM B-1763) (Desulfovibrio salexigens).